We begin with the raw amino-acid sequence, 223 residues long: PKHD-type hydroxylase syc1482_d (223 aa).

One can recognise a Fe2OG dioxygenase domain in the interval 78-176; sequence RVHSLLFSRY…RFACVGWVQS (99 aa). 3 residues coordinate Fe cation: H96, D98, and H157. R167 is a binding site for 2-oxoglutarate.

Requires Fe(2+) as cofactor. L-ascorbate is required as a cofactor.

The polypeptide is PKHD-type hydroxylase syc1482_d (Synechococcus sp. (strain ATCC 27144 / PCC 6301 / SAUG 1402/1) (Anacystis nidulans)).